The primary structure comprises 350 residues: Inactive ADP-ribosyltransferase arh2 (350 aa).

Belongs to the ADP-ribosylglycohydrolase family.

The protein localises to the cytoplasm. It localises to the myofibril. It is found in the sarcomere. Required for myofibril assembly and outgrowth of the cardiac chambers in the developing heart. Appears to be catalytically inactive, showing no activity against O-acetyl-ADP-ribose. The polypeptide is Inactive ADP-ribosyltransferase arh2 (adprhl1) (Danio rerio (Zebrafish)).